The following is a 119-amino-acid chain: Holo-[acyl-carrier-protein] synthase (119 aa).

D8 and E59 together coordinate Mg(2+).

This sequence belongs to the P-Pant transferase superfamily. AcpS family. Requires Mg(2+) as cofactor.

It is found in the cytoplasm. The enzyme catalyses apo-[ACP] + CoA = holo-[ACP] + adenosine 3',5'-bisphosphate + H(+). Functionally, transfers the 4'-phosphopantetheine moiety from coenzyme A to a Ser of acyl-carrier-protein. The polypeptide is Holo-[acyl-carrier-protein] synthase (Staphylococcus aureus (strain USA300)).